The sequence spans 347 residues: S-adenosylmethionine:tRNA ribosyltransferase-isomerase (347 aa).

The protein belongs to the QueA family. As to quaternary structure, monomer.

The protein resides in the cytoplasm. It carries out the reaction 7-aminomethyl-7-carbaguanosine(34) in tRNA + S-adenosyl-L-methionine = epoxyqueuosine(34) in tRNA + adenine + L-methionine + 2 H(+). Its pathway is tRNA modification; tRNA-queuosine biosynthesis. Transfers and isomerizes the ribose moiety from AdoMet to the 7-aminomethyl group of 7-deazaguanine (preQ1-tRNA) to give epoxyqueuosine (oQ-tRNA). The sequence is that of S-adenosylmethionine:tRNA ribosyltransferase-isomerase from Gluconobacter oxydans (strain 621H) (Gluconobacter suboxydans).